The primary structure comprises 177 residues: Putative pre-16S rRNA nuclease (177 aa).

It belongs to the YqgF nuclease family.

It is found in the cytoplasm. Its function is as follows. Could be a nuclease involved in processing of the 5'-end of pre-16S rRNA. The sequence is that of Putative pre-16S rRNA nuclease from Psychrobacter sp. (strain PRwf-1).